Reading from the N-terminus, the 328-residue chain is MISLESQVLQRHLSFFEHKSVLFAGGINDQFPQQVPARSVKVWSWYFDYAKSKSAVDFSLTCEEKADLMVFYWTKNKQEVQFQLMQLLAQAPIGQEMLIVGENRCGVRSVEKMLDAYGDIAKIDSARRCGLYHFCLKNTPHFALADYWKTYQHPRLGDLRIYSLPGVFSANELDVGTDLLLSTLDQPVRGKVLDLGCGAGVIGAYIKQQYPQVELTMADIHALALASSQRTLAENQLEAEVIASDVFSNVAGKFDLIISNPPFHDGIDTAYRAVSELIMQAKWHLVPGGELRIVANAFLPYPDLLDQHFGSHCVLAKTTKFKVYSVRG.

This sequence belongs to the methyltransferase superfamily. RsmC family. In terms of assembly, monomer.

It is found in the cytoplasm. The catalysed reaction is guanosine(1207) in 16S rRNA + S-adenosyl-L-methionine = N(2)-methylguanosine(1207) in 16S rRNA + S-adenosyl-L-homocysteine + H(+). Specifically methylates the guanine in position 1207 of 16S rRNA in the 30S particle. In Pasteurella multocida (strain Pm70), this protein is Ribosomal RNA small subunit methyltransferase C.